We begin with the raw amino-acid sequence, 64 residues long: Large ribosomal subunit protein uL29 (64 aa).

Belongs to the universal ribosomal protein uL29 family.

The protein is Large ribosomal subunit protein uL29 of Ligilactobacillus salivarius (strain UCC118) (Lactobacillus salivarius).